The following is a 543-amino-acid chain: UBP9-binding protein bun62 (543 aa).

Phosphoserine is present on S43. WD repeat units lie at residues 239–279 (LNSS…QPLH), 320–361 (FSKS…DVFH), 362–401 (SYFA…LVAR), 404–448 (GHKS…IHRP), and 513–542 (VDDS…TWQR).

As to quaternary structure, interacts with ubp9 and bun107.

The protein localises to the nucleus. It is found in the cytoplasm. It localises to the cell tip. Its function is as follows. Required for the ubp9 recruitment to septa and cell tips but also for its enzymatic activity at these specific locations. This chain is UBP9-binding protein bun62 (bun62), found in Schizosaccharomyces pombe (strain 972 / ATCC 24843) (Fission yeast).